The following is a 145-amino-acid chain: Large-conductance mechanosensitive channel (145 aa).

2 consecutive transmembrane segments (helical) span residues 14 to 34 and 81 to 101; these read VIDL…VDSL and GIFI…FLMV.

The protein belongs to the MscL family. Homopentamer.

It localises to the cell inner membrane. Functionally, channel that opens in response to stretch forces in the membrane lipid bilayer. May participate in the regulation of osmotic pressure changes within the cell. The protein is Large-conductance mechanosensitive channel of Pelobacter propionicus (strain DSM 2379 / NBRC 103807 / OttBd1).